Consider the following 181-residue polypeptide: Mating-type protein A1 (181 aa).

Positions 122-181 form a DNA-binding region, homeobox; it reads DKKKRRHIPESSKELLEKAFKVKRFPNSKERERIARECGISPLQVRVWFTNKRARSKSRA.

Belongs to the MATA1 family.

The protein resides in the nucleus. Functionally, mating type proteins are sequence specific DNA-binding proteins that act as master switches in yeast differentiation by controlling gene expression in a cell type-specific fashion. In Pichia angusta (Yeast), this protein is Mating-type protein A1 (MATA1).